Reading from the N-terminus, the 82-residue chain is Hydrogenase maturation factor HybG (82 aa).

It belongs to the HupF/HypC family.

It participates in protein modification; [NiFe] hydrogenase maturation. In terms of biological role, involved in the maturation of [NiFe] hydrogenases. Involved in the biosynthesis of the Fe(CN)(2)CO cofactor. HybG delivers iron-bound CO(2) to HypD where reduction to CO probably occurs. In complex with HypD, accepts the cyanide ligand generated by HypF and HypE, and also coordinates the carbon monoxide ligand. This is Hydrogenase maturation factor HybG (hybG) from Escherichia coli O157:H7.